A 261-amino-acid polypeptide reads, in one-letter code: uncharacterized protein (261 aa).

The interval 1–22 (MAETTEPPSDAGTSQADAMALA) is disordered. A helical transmembrane segment spans residues 107–127 (IAMAAAVVIICGFTGLSGYIV).

This sequence to M.tuberculosis Rv1362c.

The protein localises to the membrane. This is an uncharacterized protein from Mycobacterium tuberculosis (strain ATCC 25618 / H37Rv).